The chain runs to 292 residues: DCN1-like protein 4 (292 aa).

The interval 43–83 is disordered; sequence HQTGSLRSCSSSDCFNKVMPPRKKRRPASGDDLSAKKSRHD. Residues 45–56 show a composition bias toward polar residues; it reads TGSLRSCSSSDC. K95 is covalently cross-linked (Glycyl lysine isopeptide (Lys-Gly) (interchain with G-Cter in SUMO2)). One can recognise a DCUN1 domain in the interval 101–287; it reads FSSKRCLEWF…LLDEFVEWYK (187 aa).

Interacts (via the DCUN1 domain) with the unneddylated cullins: interacts with CUL1, CUL2, CUL3, CUL4A, CUL4B and CUL5; these interactions promote the cullin neddylation and the identity of the cullin dictates the affinity of the interaction. Interacts with RBX1 and RNF7. Interacts with CAND1; this interaction is bridged by cullins such as CUL3 and strongly inhibits the neddylation of CUL3. These CAND-cullin-DCNL complexes can only be neddylated in the presence of a substrate adapter. Interacts (via DCUN1 domain) with UBE2M (N-terminally acetylated form) and probably with UBE2F (N-terminally acetylated form).

Its subcellular location is the nucleus. Its function is as follows. Contributes to the neddylation of all cullins by transferring NEDD8 from N-terminally acetylated NEDD8-conjugating E2s enzyme to different cullin C-terminal domain-RBX complexes which are necessary for the activation of cullin-RING E3 ubiquitin ligases (CRLs). This chain is DCN1-like protein 4, found in Homo sapiens (Human).